A 736-amino-acid chain; its full sequence is Myotubularin-related protein 12 (736 aa).

In terms of domain architecture, Myotubularin phosphatase spans 182 to 558; sequence YLRSTNPEML…RQLSLPSSAF (377 aa). Residues 672-691 are disordered; that stretch reads SLATQPDHPPPLHHRLPSFG.

This sequence belongs to the protein-tyrosine phosphatase family. Non-receptor class myotubularin subfamily. Heterodimer with lipid phosphatase mtm1. In skeletal muscles, the interaction stabilizes both mtmr12 and mtm1 protein levels.

The protein resides in the cytoplasm. Its subcellular location is the sarcoplasmic reticulum. It is found in the myofibril. The protein localises to the sarcomere. In terms of biological role, acts as an adapter for the myotubularin phosphatase mtm1 to regulate mtm1 protein stability and possibly its intracellular location. By stabilizing mtm1 protein levels, required for skeletal muscle maintenance but not for myogenesis. In skeletal muscle cells, does not regulate mtm1 subcellular localization. This chain is Myotubularin-related protein 12 (mtmr12), found in Danio rerio (Zebrafish).